We begin with the raw amino-acid sequence, 297 residues long: MSHSDQSQRFLFDDTDVRGEMVDLERSYSEVLAKHPYPEPVAQLLGEMLAAASLLCGTLKFDGLLVLQARSSGAVPLLMVECSSDRQVRGLARYSAESIGADAGMQELMPEGVLTLTVDPVKGQRYQGIVALEGVNLAECLSNYFASSEQLPTRFWLNANGRRARGLLLQQLPADRLKDPEAREASWQHLTTLADTLTAEELLALDNETVLHRLYHEETVRLFEPQPLVFHCSCSRERSANALVSLGQADCERLLEEEEGSITIDCQFCNQRYLFDASDVAQLFAGAGSQGPSETRH.

2 cysteine pairs are disulfide-bonded: cysteine 232/cysteine 234 and cysteine 266/cysteine 269.

The protein belongs to the HSP33 family. Post-translationally, under oxidizing conditions two disulfide bonds are formed involving the reactive cysteines. Under reducing conditions zinc is bound to the reactive cysteines and the protein is inactive.

The protein localises to the cytoplasm. Its function is as follows. Redox regulated molecular chaperone. Protects both thermally unfolding and oxidatively damaged proteins from irreversible aggregation. Plays an important role in the bacterial defense system toward oxidative stress. The chain is 33 kDa chaperonin from Pseudomonas aeruginosa (strain UCBPP-PA14).